Reading from the N-terminus, the 281-residue chain is Auxin-responsive protein IAA10 (281 aa).

2 disordered regions span residues 1–115 and 130–157; these read MRGG…VVGW and AKEN…EEGE. The segment covering 7–17 has biased composition (low complexity); sequence GPTAGEPPGTE. Residues 18 to 35 are compositionally biased toward acidic residues; the sequence is AEAEEVEESSAGDDEELE. Positions 36–40 match the EAR-like (transcriptional repression) motif; the sequence is LGLSL. Composition is skewed to low complexity over residues 36–49 and 63–84; these read LGLS…QQQQ and PAAA…AAAA. Residues 133–157 are compositionally biased toward basic and acidic residues; the sequence is NTSETDTKKTATNESDVQKDKEEGE. One can recognise a PB1 domain in the interval 163-259; sequence AGWVKVNMDG…KRLRIMRTSD (97 aa).

Belongs to the Aux/IAA family. As to quaternary structure, homodimers and heterodimers. As to expression, highly expressed in flowers. Expressed in shoots.

It localises to the nucleus. Functionally, aux/IAA proteins are short-lived transcriptional factors that function as repressors of early auxin response genes at low auxin concentrations. In Oryza sativa subsp. indica (Rice), this protein is Auxin-responsive protein IAA10 (IAA10).